The sequence spans 955 residues: Isoleucine--tRNA ligase (955 aa).

Positions 60–70 (PYANGDLHIGH) match the 'HIGH' region motif. Glutamate 563 contacts L-isoleucyl-5'-AMP. The short motif at 604–608 (KMSKS) is the 'KMSKS' region element. ATP is bound at residue lysine 607. 4 residues coordinate Zn(2+): cysteine 926, cysteine 929, cysteine 946, and cysteine 949.

It belongs to the class-I aminoacyl-tRNA synthetase family. IleS type 1 subfamily. Monomer. Requires Zn(2+) as cofactor.

Its subcellular location is the cytoplasm. The catalysed reaction is tRNA(Ile) + L-isoleucine + ATP = L-isoleucyl-tRNA(Ile) + AMP + diphosphate. Its function is as follows. Catalyzes the attachment of isoleucine to tRNA(Ile). As IleRS can inadvertently accommodate and process structurally similar amino acids such as valine, to avoid such errors it has two additional distinct tRNA(Ile)-dependent editing activities. One activity is designated as 'pretransfer' editing and involves the hydrolysis of activated Val-AMP. The other activity is designated 'posttransfer' editing and involves deacylation of mischarged Val-tRNA(Ile). This is Isoleucine--tRNA ligase from Cyanothece sp. (strain PCC 7425 / ATCC 29141).